The sequence spans 443 residues: MSDPRPNTLSPLATLTPPSSSRTWQTAPHPTLPIVATACSDRSVRVYSLTSFTLLHSITGGHKRSVRAVSWKPHTQGQSVLATGSFDSSAGIWRREEQGGNEDDFTNRRVGGAEDEDGRDDDDEDEYQFSCILDGHESEIKSLSWSPTGQYLATCSRDKSVWIWEELEDDNFETVAVLQEHDGDVKCVAWHPEEDLLASASYDDSVRLYREDSDDWVQVACIAGKEGHGMTVWWVEFEGSGISGKDFRVQRDGLSEEQTQHVDSMERSGPRLATCSDDRTVRIWRRKPRERAENASSNTGIPSIIRSAAIDEDWYQDAILPQVHERAIYSVSWSRTTGLIASAGSDGKIIIYKERWRKQTPNGVDTDNMQIDGSEPASLTEWFVLAELFSAHSVFEINHVTWAKRADKDKRYDGEEVIVSTGDEGEVKVWTLDEVADPPQRDA.

2 disordered regions span residues 1–27 and 95–124; these read MSDP…WQTA and REEQ…DDDE. Residues 8-21 show a composition bias toward low complexity; it reads TLSPLATLTPPSSS. WD repeat units lie at residues 14–57 and 61–103; these read TLTP…LLHS and GHKR…GNED. A compositionally biased stretch (acidic residues) spans 113–124; that stretch reads AEDEDGRDDDDE. 6 WD repeats span residues 135–174, 180–219, 221–248, 255–294, 323–362, and 391–440; these read GHES…NFET, EHDG…WVQV, CIAG…KDFR, SEEQ…RAEN, VHER…QTPN, and AHSV…DPPQ.

This sequence belongs to the WD repeat CIA1 family.

Its function is as follows. Essential component of the cytosolic iron-sulfur (Fe/S) protein assembly machinery. Required for the maturation of extramitochondrial Fe/S proteins. In Phaeosphaeria nodorum (strain SN15 / ATCC MYA-4574 / FGSC 10173) (Glume blotch fungus), this protein is Probable cytosolic iron-sulfur protein assembly protein 1.